The chain runs to 505 residues: Glutamate--tRNA ligase (505 aa).

The 'HIGH' region signature appears at 12 to 22 (PSPTGALHIGG). Residues 260 to 264 (KLSKR) carry the 'KMSKS' region motif. K263 provides a ligand contact to ATP.

The protein belongs to the class-I aminoacyl-tRNA synthetase family. Glutamate--tRNA ligase type 1 subfamily. In terms of assembly, monomer.

It localises to the cytoplasm. It catalyses the reaction tRNA(Glu) + L-glutamate + ATP = L-glutamyl-tRNA(Glu) + AMP + diphosphate. Catalyzes the attachment of glutamate to tRNA(Glu) in a two-step reaction: glutamate is first activated by ATP to form Glu-AMP and then transferred to the acceptor end of tRNA(Glu). The protein is Glutamate--tRNA ligase of Phocaeicola vulgatus (strain ATCC 8482 / DSM 1447 / JCM 5826 / CCUG 4940 / NBRC 14291 / NCTC 11154) (Bacteroides vulgatus).